Here is a 434-residue protein sequence, read N- to C-terminus: F-box/LRR-repeat protein 21 (434 aa).

The 47-residue stretch at 39-85 (LLDWGNLPHHVVLRIFQYLPLIDRARASSVCRRWNEVFHIPDLWRKF) folds into the F-box domain. LRR repeat units follow at residues 187 to 213 (DTPV…KMSS), 214 to 239 (CPHV…ALNY), 242 to 265 (LSDK…RIDV), 322 to 347 (GRSV…VVCA), 349 to 374 (GIQV…GLSE), and 375 to 400 (CEVS…SIME).

As to quaternary structure, part of the SCF (SKP1-CUL1-F-box) E3 ubiquitin-protein ligase complex SCF(FBXL21) composed of CUL1, SKP1, RBX1 and FBXL21. Interacts with CRY1 and CRY2.

The protein resides in the cytoplasm. Its subcellular location is the cytosol. It localises to the nucleus. Its pathway is protein modification; protein ubiquitination. In terms of biological role, substrate-recognition component of the SCF(FBXL21) E3 ubiquitin ligase complex involved in circadian rhythm function. Plays a key role in the maintenance of both the speed and the robustness of the circadian clock oscillation. The SCF(FBXL21) complex mainly acts in the cytosol and mediates ubiquitination of CRY proteins (CRY1 and CRY2), leading to CRY proteins stabilization. The SCF(FBXL21) complex counteracts the activity of the SCF(FBXL3) complex and protects CRY proteins from degradation. Involved in the hypothalamic suprachiasmatic nucleus (SCN) clock regulating temporal organization of the daily activities. The polypeptide is F-box/LRR-repeat protein 21 (FBXL21) (Bos taurus (Bovine)).